The chain runs to 98 residues: NADH-ubiquinone oxidoreductase chain 4L (98 aa).

Transmembrane regions (helical) follow at residues 1-21, 29-49, and 61-81; these read MSLT…GLLM, SLLC…VIIL, and IILL…LVMV.

The protein belongs to the complex I subunit 4L family. As to quaternary structure, core subunit of respiratory chain NADH dehydrogenase (Complex I) which is composed of 45 different subunits.

The protein resides in the mitochondrion inner membrane. It catalyses the reaction a ubiquinone + NADH + 5 H(+)(in) = a ubiquinol + NAD(+) + 4 H(+)(out). Core subunit of the mitochondrial membrane respiratory chain NADH dehydrogenase (Complex I) which catalyzes electron transfer from NADH through the respiratory chain, using ubiquinone as an electron acceptor. Part of the enzyme membrane arm which is embedded in the lipid bilayer and involved in proton translocation. In Uroderma bilobatum (Tent-making bat), this protein is NADH-ubiquinone oxidoreductase chain 4L (MT-ND4L).